The sequence spans 148 residues: Proteasome chaperone 4 (148 aa).

The protein belongs to the PSMG4 family. Component of the 20S proteasome chaperone. Forms a heterodimer with IRC25 that binds to proteasome precursors. Interacts with POP2.

It is found in the cytoplasm. In terms of biological role, involved in 20S proteasome assembly, facilitating the alpha-ring formation. Involved in maintenance of telomere length. In Saccharomyces cerevisiae (strain ATCC 204508 / S288c) (Baker's yeast), this protein is Proteasome chaperone 4 (POC4).